We begin with the raw amino-acid sequence, 157 residues long: UPF0178 protein BH1374 (157 aa).

Belongs to the UPF0178 family.

This chain is UPF0178 protein BH1374, found in Halalkalibacterium halodurans (strain ATCC BAA-125 / DSM 18197 / FERM 7344 / JCM 9153 / C-125) (Bacillus halodurans).